The primary structure comprises 3655 residues: MEDGFEKSLSSSIELLKAESTEIEEKIKLTKILITKVSSISSDASQLYAELIPLLLDFLRNTEVNLYRNSSVNELKIEALTLIQSCAHRDEFKQYAQSCVLSFISLIKADNEEVAVFCLKVIMDIFKTFKFCIESTAQPFFDLVLELSTNLPYLIPSIFVENPKSNEEENTTLAFGSYLSTETSIIQQRVNSLAISTQPLELASQSFRVYVECPVIIVLILQAYRQAAFPGVQAIIPCFLKMVQIDVPIDIASYAMIEKDSSIDFIEFIRNKYQYRNFFMAQVKTLSFLAYILRTHPNTLSEKDIIPDIVIKLLRRCPFDMCFARKELLVATRHILSTNLKSLFVKKLDFLLDLNILLGNGVGTQKLLRPLAFSTLADLLHHVRDELNETQIRKSIMIYSTNMHDLTLSIGLQTMGARLILNMVDRMISLPSIPDAIFLLLSIFDSFVNKFSELNDSLDQFFKKKYEEEIKETKSPTRSSPRDLSSFSTSVNDGSFLFKNLMFGLRALMYGLRTCKSRCIEIGGEQFSGFLTNIKPFEAVTFQKLFFEVGKGFSYFRPEQVYLETFFCCEEESLDRPAISTLPRNKDEKDCLEVFATIFIHLEPSIFLKVFETNLPTFFDQLKKNLTLFHIPQFLLSNESTSSKFLNILLRFLLSRIEELGSSDIRHGSVLLRLFRLSFVTVSMFATENEPVLRPYVSEIIVKCMKLAPNSANSLNYYYLLRALFRGIGGGRFESLYKEVMPLLHALLEAFNSLLISARTPKEKDLFTELCLTIPVRLSLLLPYMSYLMRPLVMSLKSSQELVSQGLRTFELCLDNLTPDFLDPIMAPYIEDLMNALWSHLQPLPYNYNHSHTALKILGKLGGRNRKLLDRVQSLKNSPEPNNDFTLLLSIKGVKQPQLLHYTQYVDEAVNLLSSPSSDLEVKQQAFTYVCNISKLYVYKSDATNSLASSIRCTADKISKSNFDFRRPYSVIPSRMTGRSSFTQLSDDSDETIILASATYGLFFATTVDELREEAYFWLEKLAVNVIVHDIFYAFDVIQGNHSKFTTNLQKEVIISPHYFAHCLSEVVCNDNSKMGDAVKHVLKFMFSFLESIFENPERAFILPIFEVLLSDFRHKCYDPHWYKKYGGCFGLECLIEQDHSSKWLFDRQVDILTALFFTLKDTTSEVPTVCKDHVMDVLKQLFRKIYASKDTEIAPGILGHLVLELSNHNSVVRSSTQKLLSLLSELSNTPIVKLVSPFKERLLSPIFAKPLRALPFHIQIGHIDAVNYCISLGSELITFSDELIRLIHETTALAEADDDALIGIGKTSHFKNAALLIRLRVVCVELLSTCILKIDFNNPQHAHLREGIIVVFFKSLYAKSKELIEAASLGLKNALQEDQKLSKELLQTTLRPILYNISDYRRLSVAGLEGLGRLLRLLTNYFKVEIGRKLLDHLKALLENVDFQKVSSLPLFCQTEMKIVRALIDLFHLLPNNANRFMDELLICVVEFSLRLQRTFPNYFSEPLLKYVNRYPEDAWKFFMVRYDEAAFTSVFVELLRLKDSDPLLSVVKDNWLFFQTILTNEINTVTANRYSFALDSAIVILQRDPSFFKDKNDFFRGSMDAVLAISHLVENESILESMVFWNDLLVRTSTFLLEVYDLCIYNYDDGLKLLSCFHMYKNSLAKNLVSDLTAHLVKKIEEPDLENNVKLILNLILSKDYGFLLKENLAGILLTYLNQNVSSLEKCNQIFSIFYEVFFQHPSTNVYANDEGIKIGALQIISFFLKNVPEITVQHQTEMLKMCSLFGNSEDVMIKQLSIYVMSLFILRSQFPYELVNVVYMALLKSSPIEVRHLVKSSFDNIFSYIFSEEPESKKSPIWFELPLQVISSQSQNISQLLNVYDFISSHSDIFIEHRGRYVPILIDSLYKFGAIPNPNPEIRALSLGLIKVLLEWNDLQLKVDQKEIFSNNQKRAILSYLFRFVCLFSEPFTEGLCSEAISLLERLLSSGTWASLGMKLSFFTKSITHFDATDANSVMFANSLRTLSIVVGHSDSAWIEENLSDLKFLLEKSLENESVGVQSAIGNFVSTILTLSNTHPSIAGNPIFNDIWTSIASWTERRLQSCSQIEVTLPCVECFFKYKKDALHTLLPGFMRCFHKVAKEFLSLGSQPSGNSLNLQIVNAVDERVSILKSMIELGCSYISYLGDQRRWFLSALVQIIEKSSSYEICNYLLEIVRGWIMNSPVPVPTVKEKAALLLKMVTFEGRFSQNEQNDLFNKYLSFIADIYEMEPYKNSELTFRLEAVYLLGTRVANKKLKERFIKGLNSSFPSDLFSRFQFLLGSQHWESLSNTYWIVQLNIFLSRCFDLNQRCQFYKKPKLFSCFSIYCREFDEDLTSQAQDTEMLHNNLLKYGIIDFNQNSMLVSDFVLPVLSLQFSNSKIAEYLWRDFFNASVCSFTKDEIPLCIGSIISFLSREYHIRLLGKTPNVLETILTSIVSSDMPIPLPPHLLVYLSKTYGLHHYCILLLENSLQNNPGLSEDELTVYHKSCLDALSDIYYSLDEHDLYHGLWRRRANFLETEVATSHEQCHEWEKAQLVYEHAQLKVCTGSLPYSPTEHGFWLDHWILCAQKLNQWDVLFDFSKQEGCAELYLECAWRLSDWSTEQDTLEKATKSLSPFTSLRRHTADALLYLNKTQRKMGSVTEFSRIIDECMQFSLRRWQQLPKRVYQSHVSLLHHFQEIVELQEAFGIYSQLNDTNIHNIDNKLRDIKVVLQGWRERLPNVWDDIDIWSDLIAWRQSVFKSINKVFLPLVSIAQQSTNKSNTNSVSYLYRGYHELAWIINRFAHVARVHHLPEVCINQLTKIYTLPNIEIQEAFLKLREQAECHYESPSEMQLGLEVINNTNLMYFRNRQKAEFFTLKGMFQNRLGEKDEANQAFATAVQIDIGSGKAWSEWGLYHDELFQANPQEIHHACNAVSCFLQASSLLSSSNSKPLLTRVLWLLSVDDSHGSVSEVVSSFKSEIPTWNWIPFIPQLLSALSHRESIHARAILIQIAKTYPQSLHFQLRTAYEDFLMLKKQQAANVLRGNSRLRENDSSSDNKSKDLSPSGSFSSVSQFNSKNGSPSSIDSSEKHQISTVKPAWELIADVTSILKTAYPLLALTMETMVDQIHTRLKSFPEEDAYRLIVALLNDGLQYISRLGVVSKNTFQLPMSQANIQRFAENVLPVSVREAFLRDFVETKLDLLTYVDKLRMWRKKFENILDQRPKFLHLEQCSLYLSEFQHQKFDEVEIPGQYLLDKNNNNDFVRLERFVPNVDLVRGHTMCYKRLTLRGYDGKLYPFALQYPATRHSRREERMLQLLGTFNTVLRSKIEIQNRNFSFQIPSSIPLSSHMRIIADKPSYVTMQTISDEYCKNRGMPLDYGIRFYFDRLQTGLIQLKRASASMLSNSTVEEKKQIFRQRALQLRMQLLETLNSSVFPESIYYDYFYKTFERYCDFWFFRRTFTTQYAYMIIMTYVFNIGGRSPQKLFIVKDSGQVMSQDLLPSMTSNQPVFHNTEAVPFRLTPPIQYLISDLGVEGLLSGLVMSIAQSLSSPTTDIKQYLSLYVRDEVFWWSKQQRKPIPQGIQLFETVKVNVELLFRRISVISHNVPEDLPLNQTLVDLVSQATNPQQLAQMDQLWQAWL.

The tract at residues 8–2459 (SLSSSIELLK…REYHIRLLGK (2452 aa)) is HEAT. 26 HEAT repeats span residues 46 to 89 (QLYA…CAHR), 94 to 131 (QYAQ…TFKF), 149 to 188 (TNLP…IIQQ), 230 to 268 (PGVQ…FIEF), 300 to 338 (LSEK…ILST), 374 to 412 (STLA…SIGL), 438 to 475 (FLLL…ETKS), 606 to 643 (IFLK…STSS), 644 to 683 (KFLN…VTVS), 735 to 772 (SLYK…ELCL), 783 to 820 (PYMS…LTPD), 828 to 867 (PYIE…RNRK), 1100 to 1141 (AFIL…QDHS), 1147 to 1184 (DRQV…QLFR), 1193 to 1230 (EIAP…LSNT), 1429 to 1470 (RKLL…LFHL), 1665 to 1704 (NLVS…FLLK), 1709 to 1746 (GILL…NVYA), 1753 to 1790 (IGAL…SEDV), 1808 to 1846 (QFPY…YIFS), 1891 to 1934 (EHRG…WNDL), 1973 to 2011 (SEAI…TDAN), 2036 to 2073 (ENLS…LSNT), 2120 to 2157 (DALH…LQIV), 2183 to 2221 (DQRR…NSPV), and 2401 to 2438 (DFVL…DEIP). The head stretch occupies residues 2460–3655 (TPNVLETILT…QMDQLWQAWL (1196 aa)). An FAT domain is found at 2484-3045 (LLVYLSKTYG…HFQLRTAYED (562 aa)). Residues 3059–3105 (RGNSRLRENDSSSDNKSKDLSPSGSFSSVSQFNSKNGSPSSIDSSEK) form a disordered region. The segment covering 3063-3077 (RLRENDSSSDNKSKD) has biased composition (basic and acidic residues). Low complexity predominate over residues 3078 to 3092 (LSPSGSFSSVSQFNS). Residues 3285–3625 (VPNVDLVRGH…VISHNVPEDL (341 aa)) enclose the PI3K/PI4K catalytic domain. Residues 3291–3297 (VRGHTMC) are G-loop. Positions 3491 to 3499 (NIGGRSPQK) are catalytic loop. The tract at residues 3511-3536 (SQDLLPSMTSNQPVFHNTEAVPFRLT) is activation loop. In terms of domain architecture, FATC spans 3623–3655 (EDLPLNQTLVDLVSQATNPQQLAQMDQLWQAWL).

Belongs to the PI3/PI4-kinase family. TRA1 subfamily. Component of the NuA4 acetyltransferase complex. Tra1 is the scaffold subunit for binding to a variety of transcription activators or transcription factors to recruit NuA4 for targeted gene activation. Requires Hsp90 and its co-chaperone, the Triple-T complex (TTT), for its incorporation into NuA4. Interacts with tel2.

Component of the NuA4 histone H4/H2A acetyltransferase involved in transcription and DNA repair. This Schizosaccharomyces pombe (strain 972 / ATCC 24843) (Fission yeast) protein is NuA4 acetyltransferase complex subunit Tra2.